The chain runs to 156 residues: Rhombotin-1 (156 aa).

LIM zinc-binding domains are found at residues 22–84 (KGCA…LFGT) and 86–148 (GNCA…GHLN).

Expressed in the brain and not in the thymus.

The protein localises to the nucleus. Its function is as follows. May be involved in gene regulation within neural lineage cells potentially by direct DNA binding or by binding to other transcription factors. This chain is Rhombotin-1 (Lmo1), found in Mus musculus (Mouse).